A 435-amino-acid polypeptide reads, in one-letter code: 3-phosphoshikimate 1-carboxyvinyltransferase (435 aa).

The 3-phosphoshikimate site is built by Lys-22, Ser-23, and Arg-27. Residue Lys-22 participates in phosphoenolpyruvate binding. Phosphoenolpyruvate contacts are provided by Gly-94 and Arg-122. 4 residues coordinate 3-phosphoshikimate: Ser-166, Gln-168, Asp-314, and Lys-341. A phosphoenolpyruvate-binding site is contributed by Gln-168. Catalysis depends on Asp-314, which acts as the Proton acceptor. Phosphoenolpyruvate is bound by residues Arg-345 and Arg-388.

The protein belongs to the EPSP synthase family. In terms of assembly, monomer.

It is found in the cytoplasm. It carries out the reaction 3-phosphoshikimate + phosphoenolpyruvate = 5-O-(1-carboxyvinyl)-3-phosphoshikimate + phosphate. Its pathway is metabolic intermediate biosynthesis; chorismate biosynthesis; chorismate from D-erythrose 4-phosphate and phosphoenolpyruvate: step 6/7. In terms of biological role, catalyzes the transfer of the enolpyruvyl moiety of phosphoenolpyruvate (PEP) to the 5-hydroxyl of shikimate-3-phosphate (S3P) to produce enolpyruvyl shikimate-3-phosphate and inorganic phosphate. This chain is 3-phosphoshikimate 1-carboxyvinyltransferase, found in Ruthia magnifica subsp. Calyptogena magnifica.